Consider the following 780-residue polypeptide: Zinc finger and SCAN domain-containing protein 10 (780 aa).

Residues 1–38 form a disordered region; sequence MLGESVPAAVEQEQLGEVKLEEEEAVSPEDPRRPESRL. The span at 29–38 shows a compositional bias: basic and acidic residues; the sequence is EDPRRPESRL. The 71-residue stretch at 56–126 folds into the SCAN box domain; it reads MGPRASLSRL…LLLEGIHREP (71 aa). Disordered regions lie at residues 153–237 and 255–324; these read GCAS…SRDQ and KAWP…GSLL. Ser162 and Ser208 each carry phosphoserine. The segment covering 202-224 has biased composition (polar residues); that stretch reads SSKQPLSPGPQKTFQALQESSPQ. At Thr268 the chain carries Phosphothreonine. The segment covering 268–280 has biased composition (basic and acidic residues); that stretch reads TPDKEEFKQEEPK. 14 consecutive C2H2-type zinc fingers follow at residues 347–370, 376–398, 404–426, 432–454, 476–498, 522–544, 550–572, 578–600, 606–628, 634–656, 662–684, 690–712, 724–746, and 752–774; these read FICA…LRSH, FLCL…MRTH, HACH…LLTH, FLCA…LLAH, VLCS…LRIH, FVCS…RRVH, FSCQ…QRVH, YACP…LLTH, HHCT…QRSH, CRCS…QRIH, HACD…RRSH, YSCQ…LATH, QECV…LLVH, and YSCT…LRTH. N5-methylglutamine is present on Gln483. Residues 492–520 are disordered; that stretch reads KRHLRIHARDKDRRSSEGSGSRRRDSDRR. Residues 498-520 show a composition bias toward basic and acidic residues; the sequence is HARDKDRRSSEGSGSRRRDSDRR.

In terms of assembly, interacts with POU5F1/OCT4 and SOX2. Post-translationally, methylated at Gln-483 by N6AMT1.

The protein localises to the nucleus. Embryonic stem (ES) cell-specific transcription factor required to maintain ES cell pluripotency. Can both activate and /or repress expression of target genes, depending on the context. Specifically binds the 5'-[GA]CGCNNGCG[CT]-3' DNA consensus sequence. Regulates expression of POU5F1/OCT4, ZSCAN4 and ALYREF/THOC4. This is Zinc finger and SCAN domain-containing protein 10 (ZSCAN10) from Homo sapiens (Human).